Consider the following 435-residue polypeptide: Arginine biosynthesis bifunctional protein ArgJ, mitochondrial (435 aa).

Substrate is bound by residues Thr-167, Lys-193, Thr-204, Glu-291, Asn-430, and Thr-435. Catalysis depends on Thr-204, which acts as the Nucleophile.

The protein belongs to the ArgJ family. In terms of assembly, heterodimer of an alpha and a beta chain. The alpha and beta chains are autoproteolytically processed from a single precursor protein within the mitochondrion.

It localises to the mitochondrion matrix. The enzyme catalyses N(2)-acetyl-L-ornithine + L-glutamate = N-acetyl-L-glutamate + L-ornithine. It carries out the reaction L-glutamate + acetyl-CoA = N-acetyl-L-glutamate + CoA + H(+). The protein operates within amino-acid biosynthesis; L-arginine biosynthesis; L-ornithine and N-acetyl-L-glutamate from L-glutamate and N(2)-acetyl-L-ornithine (cyclic): step 1/1. It functions in the pathway amino-acid biosynthesis; L-arginine biosynthesis; N(2)-acetyl-L-ornithine from L-glutamate: step 1/4. Catalyzes two activities which are involved in the cyclic version of arginine biosynthesis: the synthesis of acetylglutamate from glutamate and acetyl-CoA, and of ornithine by transacetylation between acetylornithine and glutamate. This Heterostelium pallidum (strain ATCC 26659 / Pp 5 / PN500) (Cellular slime mold) protein is Arginine biosynthesis bifunctional protein ArgJ, mitochondrial.